An 800-amino-acid polypeptide reads, in one-letter code: MAEVAAGVGRFKSNYAVERKIEPFYKGGKVQLDQTGQHLFCVCGTRVNILDVASGAVLRSLEQEDQEDITAFDLSPDDKVLVTASRALLLAQWAWQEGSVTRLWKAIHTAPVATMAFDPTSTLLATGGCDGAVRVWDVVRCYGTHHFRGSPGVVHLVAFHPDPARLLLFSSAADTSIRVWSLQERSCLAVLTAHYSAVTSLTFSADGHTMLSSGRDKICVIWDLRSLQATRTVPVFESVEAAVLLPEEPAPELGVKSAGLHFLTAGDQGALRVWEAASGRCVHAQQRLRGPGRELTHCTLAHAAGLLLSVTADHNLLLYDARSLRLRKQFAGYSEEVLDVRFLGPEDSHVVVASNSPCLKVFDLQTSACQILHGHTDIVLALDVFRKGRLFASCAKDQSIRVWRMNKSGEVACVAQGSGHTHSVGTICCSRLKETFLVTGSQDCTVKLWPLPEALLSKGTGHEGGPVFLQAQATQHCHDKDINSVAVAPNDKLLATGSQDRTAKLWALPRCQLLGTFSGHRRGLWCVQFSPMDQVLATASADGTIKLWALQDFSCLKTFEGHDASVLKVAFVSRGTQLLSSGSDGLLKLWTIKNNECVRTLDAHEDKVWGLHCSRLDDRALTGASDSRVVLWKDVTEAEQAEEQAKREEQVVKQQELDNLLHEKRYLRALGLAISLDRPHTVLTVIQAIRRDPESCEKLETTVLQLRRDQKEALLRFCVTWNTNSRHCHEAQAVLGVLLRHEAPDELLTYDGVRASLEGLLPYTERHFQRLSRMLQAATFLDFLWHNMKLPALPTAPAAL.

N-acetylalanine is present on Ala2. WD repeat units lie at residues 64–105, 107–146, 149–190, 193–232, 245–284, 290–329, 332–372, 374–413, 419–459, 477–516, 519–560, 562–602, and 604–642; these read EDQE…RLWK, IHTA…GTHH, GSPG…CLAV, AHYS…ATRT, LPEE…CVHA, GPGR…LRKQ, GYSE…CQIL, GHTD…EVAC, GHTH…LSKG, CHDK…LLGT, GHRR…KTFE, HDAS…RTLD, and HEDK…EQAE. Residue Ser257 is modified to Phosphoserine. A Glycyl lysine isopeptide (Lys-Gly) (interchain with G-Cter in SUMO2) cross-link involves residue Lys407.

In terms of assembly, part of the small subunit (SSU) processome, composed of more than 70 proteins and the RNA chaperone small nucleolar RNA (snoRNA) U3.

It localises to the nucleus. It is found in the nucleolus. In terms of biological role, part of the small subunit (SSU) processome, first precursor of the small eukaryotic ribosomal subunit. During the assembly of the SSU processome in the nucleolus, many ribosome biogenesis factors, an RNA chaperone and ribosomal proteins associate with the nascent pre-rRNA and work in concert to generate RNA folding, modifications, rearrangements and cleavage as well as targeted degradation of pre-ribosomal RNA by the RNA exosome. The polypeptide is Transducin beta-like protein 3 (TBL3) (Bos taurus (Bovine)).